The primary structure comprises 103 residues: Histone H4 (103 aa).

A compositionally biased stretch (gly residues) spans 1-14 (MSGRGKGGKGLGKG). Residues 1–20 (MSGRGKGGKGLGKGGAKRHR) are disordered. Lys6 is subject to N6-acetyl-N6-methyllysine; alternate. N6-methyllysine; alternate occurs at positions 6, 9, and 13. Lys13 carries the post-translational modification N6-acetyl-N6-methyllysine; alternate. The DNA-binding element occupies 17 to 21 (KRHRK). Lys92 is subject to N6-glutaryllysine.

This sequence belongs to the histone H4 family. As to quaternary structure, the nucleosome is a histone octamer containing two molecules each of H2A, H2B, H3 and H4 assembled in one H3-H4 heterotetramer and two H2A-H2B heterodimers. The octamer wraps approximately 147 bp of DNA. Glutarylation at Lys-92 (H4K91glu) destabilizes nucleosomes by promoting dissociation of the H2A-H2B dimers from nucleosomes.

Its subcellular location is the nucleus. It is found in the chromosome. Core component of nucleosome. Nucleosomes wrap and compact DNA into chromatin, limiting DNA accessibility to the cellular machineries which require DNA as a template. Histones thereby play a central role in transcription regulation, DNA repair, DNA replication and chromosomal stability. DNA accessibility is regulated via a complex set of post-translational modifications of histones, also called histone code, and nucleosome remodeling. The chain is Histone H4 (HHF1) from Candida glabrata (strain ATCC 2001 / BCRC 20586 / JCM 3761 / NBRC 0622 / NRRL Y-65 / CBS 138) (Yeast).